We begin with the raw amino-acid sequence, 363 residues long: Cytoplasmic envelopment protein 2 (363 aa).

It belongs to the herpesviridae cytoplasmic envelopment protein 2 family. Interacts with cytoplasmic envelopment protein 3 and with the capsid.

Its subcellular location is the virion tegument. It localises to the host cytoplasm. The protein resides in the host nucleus. Functionally, plays a critical role in cytoplasmic virus egress. Participates in the final step of tegumentation and envelope acquisition within the host cytoplasm by directly interacting with the capsid. Upon virion binding to target cell, a signaling cascade is triggered to disrupt the interaction with the capsid, thereby preparing capsid uncoating. This is Cytoplasmic envelopment protein 2 (44) from Varicella-zoster virus (strain Dumas) (HHV-3).